Here is a 156-residue protein sequence, read N- to C-terminus: WASQVSENRPVCKAIIQGKQFEGLVDTGADVSIIALNQWPKNWPKQKAVTGLVGIGTASEVYQSTEILHCLGPDNQESTVQPMITSIPLNLWGRDLLQQWGAEITMPAPLYSPTSQKIMTKMGYIPGKGLGKNEDGIKVPVEAKINQEREGIGYPF.

A Peptidase A2 domain is found at 21-96; it reads FEGLVDTGAD…IPLNLWGRDL (76 aa). Asp-26 is a catalytic residue. The region spanning 111-156 is the G-patch domain; the sequence is YSPTSQKIMTKMGYIPGKGLGKNEDGIKVPVEAKINQEREGIGYPF.

This sequence belongs to the peptidase A2 family. HERV class-II K(HML-2) subfamily. Active as a homodimer. In terms of processing, autoproteolytically processed at the N-terminus. Expected C-terminal autoprocessing not detected. The sequence shown is that of the processed Pro protein.

It catalyses the reaction Processing at the authentic HIV-1 PR recognition site and release of the mature p17 matrix and the p24 capsid protein, as a result of the cleavage of the -SQNY-|-PIVQ- cleavage site.. Functionally, retroviral proteases have roles in processing of the primary translation products and the maturation of the viral particle. Endogenous Pro proteins may have kept, lost or modified their original function during evolution. This endogenous protein has retained most of the characteristics of retroviral proteases. This Homo sapiens (Human) protein is Endogenous retrovirus group K member 7 Pro protein (ERVK-7).